We begin with the raw amino-acid sequence, 96 residues long: Transmembrane protein PMIS2 (96 aa).

The next 2 membrane-spanning stretches (helical) occupy residues 31-51 (VMLA…AIYF) and 76-96 (WFNM…VLVL).

It belongs to the CD225/Dispanin family. In terms of tissue distribution, specifically expressed in testis.

The protein resides in the membrane. Its function is as follows. May play a role in spermatozoa mobility. The polypeptide is Transmembrane protein PMIS2 (Mus musculus (Mouse)).